An 85-amino-acid polypeptide reads, in one-letter code: ATP synthase subunit c (85 aa).

The next 2 helical transmembrane spans lie at 10-30 (IAVALLIGLGALGTAIGFGLL) and 53-73 (FIVAGLLDAVTMIGVGIALFF).

It belongs to the ATPase C chain family. F-type ATPases have 2 components, F(1) - the catalytic core - and F(0) - the membrane proton channel. F(1) has five subunits: alpha(3), beta(3), gamma(1), delta(1), epsilon(1). F(0) has three main subunits: a(1), b(2) and c(10-14). The alpha and beta chains form an alternating ring which encloses part of the gamma chain. F(1) is attached to F(0) by a central stalk formed by the gamma and epsilon chains, while a peripheral stalk is formed by the delta and b chains.

The protein resides in the cell inner membrane. F(1)F(0) ATP synthase produces ATP from ADP in the presence of a proton or sodium gradient. F-type ATPases consist of two structural domains, F(1) containing the extramembraneous catalytic core and F(0) containing the membrane proton channel, linked together by a central stalk and a peripheral stalk. During catalysis, ATP synthesis in the catalytic domain of F(1) is coupled via a rotary mechanism of the central stalk subunits to proton translocation. In terms of biological role, key component of the F(0) channel; it plays a direct role in translocation across the membrane. A homomeric c-ring of between 10-14 subunits forms the central stalk rotor element with the F(1) delta and epsilon subunits. The chain is ATP synthase subunit c from Pseudomonas aeruginosa (strain LESB58).